Consider the following 348-residue polypeptide: Succinylglutamate desuccinylase (348 aa).

Residues His-67, Glu-70, and His-164 each coordinate Zn(2+). Glu-228 is an active-site residue.

It belongs to the AspA/AstE family. Succinylglutamate desuccinylase subfamily. Requires Zn(2+) as cofactor.

The catalysed reaction is N-succinyl-L-glutamate + H2O = L-glutamate + succinate. It functions in the pathway amino-acid degradation; L-arginine degradation via AST pathway; L-glutamate and succinate from L-arginine: step 5/5. In terms of biological role, transforms N(2)-succinylglutamate into succinate and glutamate. The polypeptide is Succinylglutamate desuccinylase (Shewanella denitrificans (strain OS217 / ATCC BAA-1090 / DSM 15013)).